The chain runs to 642 residues: Sodium-dependent phosphate transport protein 2A (642 aa).

Topologically, residues 1 to 106 are cytoplasmic; sequence MISYGEQLSS…LRRTAMTLLK (106 aa). 2 positions are modified to phosphoserine: Ser14 and Ser37. A helical membrane pass occupies residues 107–128; the sequence is LPLMVTFLYLFVCSLDVLSSAF. Residues 129–148 are Extracellular-facing; the sequence is QLAGGKVAGDIFKDNAILAN. The chain crosses the membrane as a helical span at residues 149 to 166; sequence PVAGLVVGILVTVLVQSS. Residues 167-168 lie on the Cytoplasmic side of the membrane; that stretch reads ST. Residues 169–188 form a helical membrane-spanning segment; sequence ATSIIVSMVSSGLLEVSSAI. Over 189–350 the chain is Extracellular; that stretch reads PIIMGSNIGT…HIFVDTQLPD (162 aa). 2 disulfides stabilise this stretch: Cys228/Cys525 and Cys309/Cys339. N-linked (GlcNAc...) asparagine glycans are attached at residues Asn301, Asn326, and Asn333. The chain crosses the membrane as a helical span at residues 351 to 373; it reads LAVGLILLAGSLVLLCTCLILLV. Topologically, residues 374–415 are cytoplasmic; sequence KMLNSLLKGQVAKVIQKVINTDLPAPFTWVTGYFAMVVGAAM. The chain crosses the membrane as a helical span at residues 416-439; it reads TFIVQSSSVFTSAITPLVGLGVIS. Residues 440–469 are Extracellular-facing; it reads IERAYPLTLGSNIGTTTTAILAALASPREK. A helical transmembrane segment spans residues 470–490; sequence LSSSFQIALCHFFFNISGILL. Topologically, residues 491 to 516 are cytoplasmic; it reads WYPLPCTRLPIRMAKALGKRTAKYRW. The residue at position 511 (Thr511) is a Phosphothreonine; by PKC. The chain crosses the membrane as a helical span at residues 517–537; it reads FAVLYLLVCFLLLPSLVFGIS. The Extracellular portion of the chain corresponds to 538–542; it reads MAGWR. A helical transmembrane segment spans residues 543–564; the sequence is AMVGVGAPFGALLAFVVLINVL. Residues 565 to 642 are Cytoplasmic-facing; it reads QSRSPGRLPK…LPAHHNATRL (78 aa). Phosphoserine is present on Ser610. Position 626 is a phosphothreonine (Thr626). The residue at position 628 (Ser628) is a Phosphoserine.

This sequence belongs to the SLC34A transporter family. As to quaternary structure, interacts via its C-terminal region with NHERF4. Interacts with NHERF1. Interacts with TMEM174; regulates SLC34A1 internalization by PTH and FGF23. Expressed in the kidney cortex.

It is found in the apical cell membrane. Its subcellular location is the cell membrane. It catalyses the reaction 3 Na(+)(out) + phosphate(out) = 3 Na(+)(in) + phosphate(in). Transport activity is significantly increased in response to dietary phosphate deprivation. In terms of biological role, involved in actively transporting phosphate into cells via Na(+) cotransport in the renal brush border membrane. The cotransport has a Na(+):Pi stoichiometry of 3:1 and is electrogenic. This chain is Sodium-dependent phosphate transport protein 2A, found in Oryctolagus cuniculus (Rabbit).